The sequence spans 84 residues: Putative glutaredoxin MT3292 (84 aa).

Residues 1–84 form the Glutaredoxin domain; the sequence is MITAALTIYT…VKAKLVKIAG (84 aa).

This Mycobacterium tuberculosis (strain CDC 1551 / Oshkosh) protein is Putative glutaredoxin MT3292.